The chain runs to 617 residues: Vitamin B12 transporter BtuB (617 aa).

Residues 1-22 (MRKTFLAITCASLLSPTFYSQA) form the signal peptide. Positions 29–36 (ETVVVTAN) match the TonB box motif. Residues 40–154 (QIDGAVLAQT…ISGVINIITR (115 aa)) enclose the TBDR plug domain. The TBDR beta-barrel domain occupies 159-617 (DDSGRVSAGY…QYFVSADYRF (459 aa)). The TonB C-terminal box signature appears at 600 to 617 (VGYVTPGRQYFVSADYRF).

This sequence belongs to the TonB-dependent receptor family. BtuB (TC 1.B.14.3.1) subfamily.

The protein resides in the cell outer membrane. Involved in the active translocation of vitamin B12 (cyanocobalamin) across the outer membrane to the periplasmic space. It derives its energy for transport by interacting with the trans-periplasmic membrane protein TonB. The polypeptide is Vitamin B12 transporter BtuB (Vibrio campbellii (strain ATCC BAA-1116)).